A 298-amino-acid chain; its full sequence is 2-dehydropantoate 2-reductase (298 aa).

Residues 7–12 (GGGSVG), Asn-98, and Ala-124 each bind NADP(+). Asn-98 provides a ligand contact to substrate. The active-site Proton donor is the Lys-179. Residues Asn-183, Asn-187, Asn-197, and Ser-246 each coordinate substrate. An NADP(+)-binding site is contributed by Glu-258.

This sequence belongs to the ketopantoate reductase family.

The protein localises to the cytoplasm. The catalysed reaction is (R)-pantoate + NADP(+) = 2-dehydropantoate + NADPH + H(+). The protein operates within cofactor biosynthesis; (R)-pantothenate biosynthesis; (R)-pantoate from 3-methyl-2-oxobutanoate: step 2/2. Functionally, catalyzes the NADPH-dependent reduction of ketopantoate into pantoic acid. The protein is 2-dehydropantoate 2-reductase (panE) of Bacillus subtilis (strain 168).